A 904-amino-acid polypeptide reads, in one-letter code: Essential for maintenance of the cell wall protein 1 (904 aa).

TPR repeat units lie at residues tryptophan 510–leucine 544, isoleucine 563–valine 596, alanine 603–serine 636, phenylalanine 637–histidine 670, alanine 671–lysine 704, and tryptophan 706–lysine 739.

It belongs to the TTC27 family.

Its subcellular location is the cytoplasm. The protein resides in the nucleus. Functionally, required for the maintenance of the cell wall integrity. The polypeptide is Essential for maintenance of the cell wall protein 1 (EMW1) (Saccharomyces cerevisiae (strain ATCC 204508 / S288c) (Baker's yeast)).